The sequence spans 794 residues: Inactive zinc metalloprotease C354.09c (794 aa).

Residues 1 to 56 form a disordered region; that stretch reads MTDEKHVYVPPPKDPPSYEEVALHSALNNSAPPNDGEQNETSMEEMEIIEPPSEDS. Residues 91-111 traverse the membrane as a helical segment; it reads IPFQFLYLAVIATVIILASYY.

This sequence belongs to the peptidase M28 family. M28B subfamily.

The protein resides in the membrane. The sequence is that of Inactive zinc metalloprotease C354.09c from Schizosaccharomyces pombe (strain 972 / ATCC 24843) (Fission yeast).